The primary structure comprises 89 residues: UPF0297 protein MGAS9429_Spy1808 (89 aa).

It belongs to the UPF0297 family.

This Streptococcus pyogenes serotype M12 (strain MGAS9429) protein is UPF0297 protein MGAS9429_Spy1808.